Here is a 339-residue protein sequence, read N- to C-terminus: DNA-directed RNA polymerase subunit alpha (339 aa).

Residues 1 to 235 form an alpha N-terminal domain (alpha-NTD) region; the sequence is MVIQKNWQEL…DQLQVFVNFE (235 aa). The alpha C-terminal domain (alpha-CTD) stretch occupies residues 251 to 339; the sequence is FNPALLKKVD…DLAKRFEEHY (89 aa).

This sequence belongs to the RNA polymerase alpha chain family. Homodimer. The RNAP catalytic core consists of 2 alpha, 1 beta, 1 beta' and 1 omega subunit. When a sigma factor is associated with the core the holoenzyme is formed, which can initiate transcription.

The catalysed reaction is RNA(n) + a ribonucleoside 5'-triphosphate = RNA(n+1) + diphosphate. Its function is as follows. DNA-dependent RNA polymerase catalyzes the transcription of DNA into RNA using the four ribonucleoside triphosphates as substrates. This is DNA-directed RNA polymerase subunit alpha from Methylorubrum extorquens (strain CM4 / NCIMB 13688) (Methylobacterium extorquens).